We begin with the raw amino-acid sequence, 599 residues long: DNA primase (599 aa).

The segment at 38–62 (CPFHDEKTPSFTVSEDKQICHCFGC) adopts a CHC2-type zinc-finger fold. Positions 260-341 (DEIVLLEGFM…NVFVIQLPSG (82 aa)) constitute a Toprim domain. Residues Glu266, Asp310, and Asp312 each coordinate Mg(2+).

It belongs to the DnaG primase family. In terms of assembly, monomer. Interacts with DnaB. Zn(2+) is required as a cofactor. Requires Mg(2+) as cofactor.

It catalyses the reaction ssDNA + n NTP = ssDNA/pppN(pN)n-1 hybrid + (n-1) diphosphate.. RNA polymerase that catalyzes the synthesis of short RNA molecules used as primers for DNA polymerase during DNA replication. This is DNA primase from Staphylococcus aureus (strain COL).